The primary structure comprises 880 residues: Translation initiation factor IF-2 (880 aa).

Residues 259–281 (KNREEARAVGRSSKSQSKRKSST) are disordered. The tr-type G domain occupies 379–548 (SRAPVVTIMG…LLQAEVLELK (170 aa)). Residues 388 to 395 (GHVDHGKT) form a G1 region. 388 to 395 (GHVDHGKT) provides a ligand contact to GTP. The interval 413–417 (GITQH) is G2. Residues 434–437 (DTPG) are G3. Residues 434–438 (DTPGH) and 488–491 (NKID) contribute to the GTP site. Residues 488–491 (NKID) are G4. The interval 524–526 (SAK) is G5.

This sequence belongs to the TRAFAC class translation factor GTPase superfamily. Classic translation factor GTPase family. IF-2 subfamily.

Its subcellular location is the cytoplasm. In terms of biological role, one of the essential components for the initiation of protein synthesis. Protects formylmethionyl-tRNA from spontaneous hydrolysis and promotes its binding to the 30S ribosomal subunits. Also involved in the hydrolysis of GTP during the formation of the 70S ribosomal complex. This is Translation initiation factor IF-2 from Baumannia cicadellinicola subsp. Homalodisca coagulata.